We begin with the raw amino-acid sequence, 520 residues long: Pleckstrin homology domain-containing family A member 8 (520 aa).

Residues 1–93 (MEGVLYKWTN…WLVALGSAKA (93 aa)) enclose the PH domain. A Phosphothreonine modification is found at Thr139. Phosphoserine is present on Ser145. At Thr153 the chain carries Phosphothreonine. The segment covering 275-285 (GEESLGNHDSD) has biased composition (basic and acidic residues). Positions 275-305 (GEESLGNHDSDLAQPELHSTSSSPESHWEED) are disordered. A glycolipid transfer protein homology domain region spans residues 311 to 520 (TFFSTMNTSF…VHGLESDEVV (210 aa)).

In terms of assembly, homodimer. Interacts with ARF1; the interaction together with phosphatidylinositol 4-phosphate binding is required for FAPP2 GlcCer transfer ability.

The protein localises to the cytoplasm. It is found in the golgi apparatus. Its subcellular location is the trans-Golgi network membrane. It localises to the membrane. Cargo transport protein that is required for apical transport from the trans-Golgi network (TGN). Transports AQP2 from the trans-Golgi network (TGN) to sites of AQP2 phosphorylation. Mediates the non-vesicular transport of glucosylceramide (GlcCer) from the trans-Golgi network (TGN) to the plasma membrane and plays a pivotal role in the synthesis of complex glycosphingolipids. Binding of both phosphatidylinositol 4-phosphate (PIP) and ARF1 are essential for the GlcCer transfer ability. Also required for primary cilium formation, possibly by being involved in the transport of raft lipids to the apical membrane, and for membrane tubulation. The chain is Pleckstrin homology domain-containing family A member 8 (PLEKHA8) from Bos taurus (Bovine).